The primary structure comprises 54 residues: Large ribosomal subunit protein bL32 (54 aa).

This sequence belongs to the bacterial ribosomal protein bL32 family.

The protein is Large ribosomal subunit protein bL32 of Buchnera aphidicola subsp. Baizongia pistaciae (strain Bp).